Here is a 94-residue protein sequence, read N- to C-terminus: AFAGVLADADIKAALAGCAAADSFNYKTFFKACGLFFAIIDQDHSGFIEEEELKLFLQTFSAGARALSDAETKTFLAAGDVDGDGMIGVDEFAA.

N-acetylalanine is present on Ala1. 2 consecutive EF-hand domains span residues 36–63 (FFAIIDQDHSGFIEEEELKLFLQTFSAG) and 67–94 (LSDAETKTFLAAGDVDGDGMIGVDEFAA). Ca(2+)-binding residues include Asp41, Asp43, Ser45, Phe47, Glu49, Glu52, Asp80, Asp82, Asp84, Met86, and Glu91.

Belongs to the parvalbumin family.

In muscle, parvalbumin is thought to be involved in relaxation after contraction. It binds two calcium ions. The polypeptide is Parvalbumin beta 4 (Merluccius bilinearis (Silver hake)).